The primary structure comprises 230 residues: Demethylluteothin O-methyltransferase (230 aa).

The protein belongs to the methyltransferase superfamily.

The catalysed reaction is demethylluteothin + S-adenosyl-L-methionine = luteothin + S-adenosyl-L-homocysteine. The protein operates within antibiotic biosynthesis. It participates in polyketide biosynthesis. Methyltransferase involved in the biosynthesis of the antibiotic aureothin, a nitroaryl polyketide metabolite with antifungal, cytotoxic and insecticidal activities. Catalyzes the methylation of demethylluteothin to luteothin (also called deoxyaureothin). Is specific for its gamma-pyrone substrate, and does not act on the alpha-pyrone isomer. This chain is Demethylluteothin O-methyltransferase, found in Streptomyces thioluteus.